A 285-amino-acid chain; its full sequence is Urease accessory protein UreD (285 aa).

It belongs to the UreD family. In terms of assembly, ureD, UreF and UreG form a complex that acts as a GTP-hydrolysis-dependent molecular chaperone, activating the urease apoprotein by helping to assemble the nickel containing metallocenter of UreC. The UreE protein probably delivers the nickel.

Its subcellular location is the cytoplasm. Functionally, required for maturation of urease via the functional incorporation of the urease nickel metallocenter. The protein is Urease accessory protein UreD of Cytophaga hutchinsonii (strain ATCC 33406 / DSM 1761 / CIP 103989 / NBRC 15051 / NCIMB 9469 / D465).